The primary structure comprises 561 residues: uncharacterized protein (561 aa).

6 consecutive transmembrane segments (helical) span residues 27 to 49 (ILEF…GLLI), 54 to 71 (FFGI…ALAL), 83 to 105 (LVYQ…SEFF), 115 to 137 (LTLF…IKLF), 142 to 162 (IIGA…AAMV), and 177 to 199 (VVGY…AIGA). The region spanning 292 to 373 (QQDVPIEDTD…MSEVRRFLGD (82 aa)) is the RCK C-terminal domain. The next 4 membrane-spanning stretches (helical) occupy residues 383-405 (LMPF…PLPG), 409-428 (LSLG…GALN), 441-463 (ASRT…SAGV), and 478-500 (IAGG…MPLF).

The protein belongs to the AAE transporter (TC 2.A.81) family.

Its subcellular location is the cell membrane. This is an uncharacterized protein from Corynebacterium diphtheriae (strain ATCC 700971 / NCTC 13129 / Biotype gravis).